The primary structure comprises 105 residues: Small ribosomal subunit protein uS10 (105 aa).

Belongs to the universal ribosomal protein uS10 family. As to quaternary structure, part of the 30S ribosomal subunit.

In terms of biological role, involved in the binding of tRNA to the ribosomes. The polypeptide is Small ribosomal subunit protein uS10 (Roseobacter denitrificans (strain ATCC 33942 / OCh 114) (Erythrobacter sp. (strain OCh 114))).